Here is a 450-residue protein sequence, read N- to C-terminus: Chromosomal replication initiator protein DnaA (450 aa).

The interval 1 to 69 (MHDVWRQATE…VGALSVTAGK (69 aa)) is domain I, interacts with DnaA modulators. The segment at 69-113 (KKYFIELVVQEEDQNAEVPQAEDLIIKGHQEIEQPVTSQPETSSS) is domain II. A domain III, AAA+ region region spans residues 114-330 (SLNPKYTFEL…GMLIRLGAYS (217 aa)). The ATP site is built by G158, G160, K161, and S162. The interval 331–450 (SLQGIPITLD…IEDIKLILLK (120 aa)) is domain IV, binds dsDNA.

Belongs to the DnaA family. As to quaternary structure, oligomerizes as a right-handed, spiral filament on DNA at oriC.

Its subcellular location is the cytoplasm. Functionally, plays an essential role in the initiation and regulation of chromosomal replication. ATP-DnaA binds to the origin of replication (oriC) to initiate formation of the DNA replication initiation complex once per cell cycle. Binds the DnaA box (a 9 base pair repeat at the origin) and separates the double-stranded (ds)DNA. Forms a right-handed helical filament on oriC DNA; dsDNA binds to the exterior of the filament while single-stranded (ss)DNA is stabiized in the filament's interior. The ATP-DnaA-oriC complex binds and stabilizes one strand of the AT-rich DNA unwinding element (DUE), permitting loading of DNA polymerase. After initiation quickly degrades to an ADP-DnaA complex that is not apt for DNA replication. Binds acidic phospholipids. The chain is Chromosomal replication initiator protein DnaA from Pelobacter propionicus (strain DSM 2379 / NBRC 103807 / OttBd1).